Consider the following 113-residue polypeptide: MAGIRALFMYLWLQLDWVSRGESVGLHLPTLSVQEGDNSIINCAYSNSASDYFIWYKQESGKGPQFIIDIRSNMDKRQGQRVTVLLNKTVKHLSLQIAATQPGDSAVYFCAEN.

Residues 1-21 form the signal peptide; it reads MAGIRALFMYLWLQLDWVSRG. In terms of domain architecture, Ig-like spans 22–113; it reads ESVGLHLPTL…DSAVYFCAEN (92 aa). Cys43 and Cys110 form a disulfide bridge. N-linked (GlcNAc...) asparagine glycosylation occurs at Asn87.

Alpha-beta TR is a heterodimer composed of an alpha and beta chain; disulfide-linked. The alpha-beta TR is associated with the transmembrane signaling CD3 coreceptor proteins to form the TR-CD3 (TcR or TCR). The assembly of alpha-beta TR heterodimers with CD3 occurs in the endoplasmic reticulum where a single alpha-beta TR heterodimer associates with one CD3D-CD3E heterodimer, one CD3G-CD3E heterodimer and one CD247 homodimer forming a stable octameric structure. CD3D-CD3E and CD3G-CD3E heterodimers preferentially associate with TR alpha and TR beta chains, respectively. The association of the CD247 homodimer is the last step of TcR assembly in the endoplasmic reticulum and is required for transport to the cell surface.

The protein localises to the cell membrane. V region of the variable domain of T cell receptor (TR) alpha chain that participates in the antigen recognition. Alpha-beta T cell receptors are antigen specific receptors which are essential to the immune response and are present on the cell surface of T lymphocytes. Recognize peptide-major histocompatibility (MH) (pMH) complexes that are displayed by antigen presenting cells (APC), a prerequisite for efficient T cell adaptive immunity against pathogens. Binding of alpha-beta TR to pMH complex initiates TR-CD3 clustering on the cell surface and intracellular activation of LCK that phosphorylates the ITAM motifs of CD3G, CD3D, CD3E and CD247 enabling the recruitment of ZAP70. In turn ZAP70 phosphorylates LAT, which recruits numerous signaling molecules to form the LAT signalosome. The LAT signalosome propagates signal branching to three major signaling pathways, the calcium, the mitogen-activated protein kinase (MAPK) kinase and the nuclear factor NF-kappa-B (NF-kB) pathways, leading to the mobilization of transcription factors that are critical for gene expression and essential for T cell growth and differentiation. The T cell repertoire is generated in the thymus, by V-(D)-J rearrangement. This repertoire is then shaped by intrathymic selection events to generate a peripheral T cell pool of self-MH restricted, non-autoaggressive T cells. Post-thymic interaction of alpha-beta TR with the pMH complexes shapes TR structural and functional avidity. The sequence is that of T cell receptor alpha variable 13-2 from Homo sapiens (Human).